The chain runs to 382 residues: S-adenosylmethionine synthase (382 aa).

His14 lines the ATP pocket. Asp16 serves as a coordination point for Mg(2+). Position 42 (Glu42) interacts with K(+). Residues Glu55 and Gln91 each contribute to the L-methionine site. A flexible loop region spans residues 91–101; it reads QSENIAMGVNL. ATP is bound by residues 156–158, 222–223, Asp231, 237–238, Ala254, and Lys258; these read DMK, KF, and RK. Residue Asp231 participates in L-methionine binding. Position 262 (Lys262) interacts with L-methionine.

Belongs to the AdoMet synthase family. As to quaternary structure, homotetramer; dimer of dimers. Mg(2+) serves as cofactor. K(+) is required as a cofactor.

The protein localises to the cytoplasm. It catalyses the reaction L-methionine + ATP + H2O = S-adenosyl-L-methionine + phosphate + diphosphate. Its pathway is amino-acid biosynthesis; S-adenosyl-L-methionine biosynthesis; S-adenosyl-L-methionine from L-methionine: step 1/1. Its function is as follows. Catalyzes the formation of S-adenosylmethionine (AdoMet) from methionine and ATP. The overall synthetic reaction is composed of two sequential steps, AdoMet formation and the subsequent tripolyphosphate hydrolysis which occurs prior to release of AdoMet from the enzyme. This is S-adenosylmethionine synthase from Mycoplasmopsis synoviae (strain 53) (Mycoplasma synoviae).